Consider the following 261-residue polypeptide: Endomucin (261 aa).

Positions 1 to 18 are cleaved as a signal peptide; it reads MELLQVTILFLLPSICSS. N-linked (GlcNAc...) asparagine glycans are attached at residues N19, N28, N98, and N104. At 19-190 the chain is on the extracellular side; sequence NSTGVLEAAN…TSATSRSYSS (172 aa). Polar residues-rich tracts occupy residues 118–134 and 146–171; these read TLQS…SIKT and ASPS…SQVI. Residues 118 to 183 are disordered; that stretch reads TLQSSKPKTE…EGGKNASTSA (66 aa). N-linked (GlcNAc...) asparagine glycans are attached at residues N164 and N178. A helical membrane pass occupies residues 191 to 211; that stretch reads IILPVVIALIVITLSVFVLVG. Residues 212–261 are Cytoplasmic-facing; the sequence is LYRMCWKADPGTPENGNDQPQSDKESVKLLTVKTISHESGEHSAQGKTKN. A Phosphoserine modification is found at S237.

Post-translationally, highly O-glycosylated. Sialic acid-rich glycoprotein. In terms of tissue distribution, expressed in heart, kidney and lung.

It localises to the cell membrane. Its subcellular location is the membrane. The protein localises to the secreted. Endothelial sialomucin, also called endomucin or mucin-like sialoglycoprotein, which interferes with the assembly of focal adhesion complexes and inhibits interaction between cells and the extracellular matrix. This is Endomucin (EMCN) from Homo sapiens (Human).